A 354-amino-acid polypeptide reads, in one-letter code: Caffeate O-methyltransferase-like protein 2 (354 aa).

Positions 198, 221, 242, and 255 each coordinate S-adenosyl-L-homocysteine. The Proton acceptor role is filled by histidine 259. Residues glutamate 287 and glutamate 319 contribute to the active site.

This sequence belongs to the class I-like SAM-binding methyltransferase superfamily. Cation-independent O-methyltransferase family. COMT subfamily.

The protein is Caffeate O-methyltransferase-like protein 2 of Oryza sativa subsp. japonica (Rice).